The sequence spans 275 residues: Homeobox protein Hox-C12a (275 aa).

Disordered stretches follow at residues 101–129 and 148–213; these read SREN…DHGM and QLTQ…KRKP. The span at 155-177 shows a compositional bias: low complexity; sequence SCQSMESDSSSSLLNEASKPSSS. Over residues 178-194 the composition is skewed to polar residues; sequence DTQTLVSPGSHTGTITA. The segment at residues 207 to 266 is a DNA-binding region (homeobox); sequence TRKKRKPYSKLQLAELEGEFMMNEFITRQRRRELSDRLNLSDQQVKIWFQNRRMKKKRLM.

It belongs to the Abd-B homeobox family.

The protein resides in the nucleus. Sequence-specific transcription factor which is part of a developmental regulatory system that provides cells with specific positional identities on the anterior-posterior axis. The polypeptide is Homeobox protein Hox-C12a (hoxc12a) (Takifugu rubripes (Japanese pufferfish)).